We begin with the raw amino-acid sequence, 404 residues long: Glucosyl-3-phosphoglycerate synthase (404 aa).

Asp146 contacts a divalent metal cation. 188–190 (GRV) lines the (2R)-3-phosphoglycerate pocket. His270 provides a ligand contact to a divalent metal cation.

The protein belongs to the glycosyltransferase 2 family. Requires Mn(2+) as cofactor. Co(2+) is required as a cofactor. It depends on Mg(2+) as a cofactor.

It catalyses the reaction an NDP-alpha-D-glucose + (2R)-3-phosphoglycerate = (2R)-2-O-(alpha-D-glucopyranosyl)-3-phospho-glycerate + a ribonucleoside 5'-diphosphate + H(+). Involved in the biosynthesis of 6-O-methylglucose lipopolysaccarides (MGLPs). Catalyzes the transfer of a glucose (Glc) moiety from uridine diphosphate (UDP-Glc) to the position 2 of 3-phospho-D-glycerate (3-PGA) to form glucosyl-3-phosphoglycerate (GPG). This chain is Glucosyl-3-phosphoglycerate synthase, found in Methanococcoides burtonii (strain DSM 6242 / NBRC 107633 / OCM 468 / ACE-M).